Here is an 81-residue protein sequence, read N- to C-terminus: Photosystem I iron-sulfur center (81 aa).

2 consecutive 4Fe-4S ferredoxin-type domains span residues 2–31 (SHAV…MVPW) and 39–68 (IAAS…IRVY). Residues Cys11, Cys14, Cys17, Cys21, Cys48, Cys51, Cys54, and Cys58 each contribute to the [4Fe-4S] cluster site.

The cyanobacterial PSI reaction center is composed of one copy each of PsaA,B,C,D,E,F,I,J,K,L,M and X, and forms trimeric complexes. It depends on [4Fe-4S] cluster as a cofactor.

It is found in the cellular thylakoid membrane. The catalysed reaction is reduced [plastocyanin] + hnu + oxidized [2Fe-2S]-[ferredoxin] = oxidized [plastocyanin] + reduced [2Fe-2S]-[ferredoxin]. In terms of biological role, apoprotein for the two 4Fe-4S centers FA and FB of photosystem I (PSI); essential for photochemical activity. FB is the terminal electron acceptor of PSI, donating electrons to ferredoxin. The C-terminus interacts with PsaA/B/D and helps assemble the protein into the PSI complex. Required for binding of PsaD and PsaE to PSI. PSI is a plastocyanin/cytochrome c6-ferredoxin oxidoreductase, converting photonic excitation into a charge separation, which transfers an electron from the donor P700 chlorophyll pair to the spectroscopically characterized acceptors A0, A1, FX, FA and FB in turn. The chain is Photosystem I iron-sulfur center from Prochlorococcus marinus (strain MIT 9303).